Reading from the N-terminus, the 152-residue chain is MANLERTFIAIKPDGVQRGLVGEIIKRFEQKGFRLVAMKFLRASEEHLKQHYIDLKDRPFFPGLVKYMNSGPVVAMVWEGLNVVKTGRVMLGETNPADSKPGTIRGDFCIQVGRNIIHGSDSVESAEKEIHLWFKPEELIDYKSCAHDWVYE.

Residues 1–66 (MANLERTFIA…DRPFFPGLVK (66 aa)) form an interaction with AKAP13 region. The ATP site is built by Lys12, Phe60, Arg88, Thr94, Arg105, and Asn115. His118 functions as the Pros-phosphohistidine intermediate in the catalytic mechanism.

The protein belongs to the NDK family. Hexamer of two different chains: An and B (A6, A5B, A4B2, A3B3, A2B4, AB5, B6). Interacts with CAPN8. Interacts with AKAP13. Interacts with ITGB1BP1 (via C-terminal domain region). Interacts with BCL2L10. Mg(2+) serves as cofactor. Expressed in the base region of the oxyntic and pyloric mucosae.

Its subcellular location is the cytoplasm. It localises to the cell projection. The protein resides in the lamellipodium. The protein localises to the ruffle. It is found in the nucleus. It carries out the reaction a 2'-deoxyribonucleoside 5'-diphosphate + ATP = a 2'-deoxyribonucleoside 5'-triphosphate + ADP. The catalysed reaction is a ribonucleoside 5'-diphosphate + ATP = a ribonucleoside 5'-triphosphate + ADP. The enzyme catalyses ATP + protein L-histidine = ADP + protein N-phospho-L-histidine.. Its function is as follows. Major role in the synthesis of nucleoside triphosphates other than ATP. The ATP gamma phosphate is transferred to the NDP beta phosphate via a ping-pong mechanism, using a phosphorylated active-site intermediate. Negatively regulates Rho activity by interacting with AKAP13/LBC. Acts as a transcriptional activator of the MYC gene; binds DNA non-specifically. Binds to both single-stranded guanine- and cytosine-rich strands within the nuclease hypersensitive element (NHE) III(1) region of the MYC gene promoter. Does not bind to duplex NHE III(1). Has G-quadruplex (G4) DNA-binding activity, which is independent of its nucleotide-binding and kinase activity. Binds both folded and unfolded G4 with similar low nanomolar affinities. Stabilizes folded G4s regardless of whether they are prefolded or not. Exhibits histidine protein kinase activity. In Mus musculus (Mouse), this protein is Nucleoside diphosphate kinase B (Nme2).